The sequence spans 218 residues: Ribose-5-phosphate isomerase A (218 aa).

Residues 28–31 (TGST), 81–84 (DGAD), and 94–97 (KGGG) each bind substrate. E103 functions as the Proton acceptor in the catalytic mechanism. K121 contributes to the substrate binding site.

The protein belongs to the ribose 5-phosphate isomerase family. In terms of assembly, homodimer.

The catalysed reaction is aldehydo-D-ribose 5-phosphate = D-ribulose 5-phosphate. Its pathway is carbohydrate degradation; pentose phosphate pathway; D-ribose 5-phosphate from D-ribulose 5-phosphate (non-oxidative stage): step 1/1. Its function is as follows. Catalyzes the reversible conversion of ribose-5-phosphate to ribulose 5-phosphate. The chain is Ribose-5-phosphate isomerase A from Shewanella piezotolerans (strain WP3 / JCM 13877).